A 355-amino-acid chain; its full sequence is Beta-1,2-mannobiose phosphorylase (355 aa).

Beta-D-Manp-(1-&gt;2)-beta-D-Manp-(1-&gt;2)-D-Manp-binding positions include asparagine 31, arginine 46, arginine 89, 140–141 (ED), lysine 188, tyrosine 273, and aspartate 333.

The protein belongs to the glycosyl hydrolase 130 family. Homodimer.

The catalysed reaction is beta-D-mannopyranosyl-(1-&gt;2)-D-mannopyranose + phosphate = alpha-D-mannose 1-phosphate + D-mannose. In terms of biological role, catalyzes the reversible phosphorolysis of 1,2-beta-oligomannan. In phosphorolytic reactions, prefers beta-1,2-mannobiose (beta-1,2-Man2) as substrate, but can also use beta-1,2-mannotriose. This is Beta-1,2-mannobiose phosphorylase from Listeria innocua serovar 6a (strain ATCC BAA-680 / CLIP 11262).